The chain runs to 75 residues: DNA-directed RNA polymerase subunit omega (75 aa).

It belongs to the RNA polymerase subunit omega family. In terms of assembly, in cyanobacteria the RNAP catalytic core is composed of 2 alpha, 1 beta, 1 beta', 1 gamma and 1 omega subunit. When a sigma factor is associated with the core the holoenzyme is formed, which can initiate transcription.

The catalysed reaction is RNA(n) + a ribonucleoside 5'-triphosphate = RNA(n+1) + diphosphate. Promotes RNA polymerase assembly. Latches the N- and C-terminal regions of the beta' subunit thereby facilitating its interaction with the beta and alpha subunits. The protein is DNA-directed RNA polymerase subunit omega of Microcystis aeruginosa (strain NIES-843 / IAM M-2473).